Reading from the N-terminus, the 116-residue chain is ADDRNPLEECFRETDYEEFLEIARNGLSDTDNPKEGWYANLGPMRLNEFSQENENAWYFIKDPGVLDYPVKPSEVGKHDDIFAYEKRFDEIVGGMDKEVTVTYQTSEKFEPPLPPK.

An FAD-binding site is contributed by 42-45 (GPMR). Substrate is bound by residues arginine 45 and histidine 78.

Belongs to the flavin monoamine oxidase family. FIG1 subfamily. As to quaternary structure, homodimer; non-covalently linked. FAD serves as cofactor. Post-translationally, glycosylated. In terms of tissue distribution, expressed by the venom gland.

The protein localises to the secreted. It catalyses the reaction an L-alpha-amino acid + O2 + H2O = a 2-oxocarboxylate + H2O2 + NH4(+). The enzyme catalyses L-leucine + O2 + H2O = 4-methyl-2-oxopentanoate + H2O2 + NH4(+). The catalysed reaction is L-phenylalanine + O2 + H2O = 3-phenylpyruvate + H2O2 + NH4(+). It carries out the reaction L-methionine + O2 + H2O = 4-methylsulfanyl-2-oxobutanoate + H2O2 + NH4(+). It catalyses the reaction L-isoleucine + O2 + H2O = (S)-3-methyl-2-oxopentanoate + H2O2 + NH4(+). The enzyme catalyses L-histidine + O2 + H2O = 3-(imidazol-5-yl)pyruvate + H2O2 + NH4(+). The catalysed reaction is L-tyrosine + O2 + H2O = 3-(4-hydroxyphenyl)pyruvate + H2O2 + NH4(+). It carries out the reaction L-tryptophan + O2 + H2O = indole-3-pyruvate + H2O2 + NH4(+). Its enzymatic activities is reduced by the presence of Zn(2+), Al(3+), Cu(2+), Na(+) or Ni(2+) salts. Its function is as follows. Catalyzes an oxidative deamination of predominantly hydrophobic and aromatic L-amino acids, thus producing hydrogen peroxide that may contribute to the diverse toxic effects of this enzyme. Shows very high enzymatic activity on L-Met and L-Leu, high activity on L-Ile, L-Phe and L-Tyr and moderate activity on L-His. Exhibits diverse biological activities, such as hemorrhage, hemolysis, edema, apoptosis of vascular endothelial cells or tumor cell lines, and antibacterial, as well as regulation of platelet aggregation. Effects of snake L-amino oxidases on platelets are controversial, since they either induce aggregation or inhibit agonist-induced aggregation. These different effects are probably due to different experimental conditions. In vitro, has a strong antiprotozoal effect against Leishmania amazonensis (IC(50)=4.56 ug/mL) and Trypanosoma cruzi (IC(50)=4.85 ug/mL). It also causes cell death and DNA damage in hepatocarcinoma cells (HepG2) in vitro by inducing oxidative stress. It exerts cytotoxicity towards colorectal adenocarcinomahuman cells (Caco-2) by acting on multiple intracellular targets. It diminishes cell viability by decreasing mitochondrial activity, the activity of acid phosphatases, and lysosomal function. In addition, it increases intracellular levels of reactive oxygen species and DNA damage, it elevates the expression of the pro-inflammatory cytokine genes TNF and IL6, and lowers the expression of the apoptotic-related genes. Also induces cytotoxicity (IC(50)=1.80 ug/mL) and apoptosis in MCF-7 cells (a human breast adeno-carcinoma cell line) by activating the intrinsic and extrinsic apoptosis pathways, but are not cytotoxic towards MCF-10A cells (a non-tumorigenic human breast epithelial cell line). This Bothrops jararacussu (Jararacussu) protein is L-amino-acid oxidase BjussuLAAO-II.